The following is a 471-amino-acid chain: 3-isopropylmalate dehydratase large subunit (471 aa).

3 residues coordinate [4Fe-4S] cluster: cysteine 349, cysteine 409, and cysteine 412.

This sequence belongs to the aconitase/IPM isomerase family. LeuC type 1 subfamily. In terms of assembly, heterodimer of LeuC and LeuD. It depends on [4Fe-4S] cluster as a cofactor.

It carries out the reaction (2R,3S)-3-isopropylmalate = (2S)-2-isopropylmalate. It participates in amino-acid biosynthesis; L-leucine biosynthesis; L-leucine from 3-methyl-2-oxobutanoate: step 2/4. Functionally, catalyzes the isomerization between 2-isopropylmalate and 3-isopropylmalate, via the formation of 2-isopropylmaleate. The protein is 3-isopropylmalate dehydratase large subunit of Aliivibrio fischeri (strain MJ11) (Vibrio fischeri).